Here is a 148-residue protein sequence, read N- to C-terminus: Probable DNA-directed RNA polymerases I, II, and III subunit RPABC3 (148 aa).

The non-specific ssDNA binding stretch occupies residues 16 to 40; that stretch reads DPDGKKFDRVSRYFCDAESFKMELI.

Belongs to the eukaryotic RPB8 RNA polymerase subunit family. In terms of assembly, component of the RNA polymerase I (Pol I), RNA polymerase II (Pol II) and RNA polymerase III (Pol III) complexes consisting of at least 13, 12 and 17 subunits, respectively. Directly interacts with POLR2A.

The protein localises to the nucleus. DNA-dependent RNA polymerase catalyzes the transcription of DNA into RNA using the four ribonucleoside triphosphates as substrates. Common component of RNA polymerases I, II and III which synthesize ribosomal RNA precursors, mRNA precursors and many functional non-coding RNAs, and small RNAs, such as 5S rRNA and tRNAs, respectively. This is Probable DNA-directed RNA polymerases I, II, and III subunit RPABC3 from Caenorhabditis briggsae.